Here is a 444-residue protein sequence, read N- to C-terminus: Methylenetetrahydrofolate--tRNA-(uracil-5-)-methyltransferase TrmFO (444 aa).

10–15 (GAGLAG) is an FAD binding site.

Belongs to the MnmG family. TrmFO subfamily. It depends on FAD as a cofactor.

The protein resides in the cytoplasm. It catalyses the reaction uridine(54) in tRNA + (6R)-5,10-methylene-5,6,7,8-tetrahydrofolate + NADH + H(+) = 5-methyluridine(54) in tRNA + (6S)-5,6,7,8-tetrahydrofolate + NAD(+). It carries out the reaction uridine(54) in tRNA + (6R)-5,10-methylene-5,6,7,8-tetrahydrofolate + NADPH + H(+) = 5-methyluridine(54) in tRNA + (6S)-5,6,7,8-tetrahydrofolate + NADP(+). Functionally, catalyzes the folate-dependent formation of 5-methyl-uridine at position 54 (M-5-U54) in all tRNAs. This chain is Methylenetetrahydrofolate--tRNA-(uracil-5-)-methyltransferase TrmFO, found in Streptococcus pneumoniae (strain ATCC 700669 / Spain 23F-1).